The primary structure comprises 252 residues: Putative phosphonates utilization ATP-binding protein PhnK (252 aa).

The region spanning 6–246 (LSVNNLTHLY…PHHPYTQLLV (241 aa)) is the ABC transporter domain. 38-45 (GESGSGKT) is a binding site for ATP.

The protein belongs to the ABC transporter superfamily. Forms a complex with PhnG, PhnH, PhnI and PhnJ with the suggested composition PhnG(4)H(2)I(2)J(2)K.

Its function is as follows. Belongs to an operon involved in alkylphosphonate uptake and C-P lyase. Exact function not known. PhnK is not required for the ribophosphonate triphosphate (RPnTP) synthase reaction. The protein is Putative phosphonates utilization ATP-binding protein PhnK (phnK) of Escherichia coli (strain K12).